The sequence spans 859 residues: Envelope glycoprotein gp160 (859 aa).

A signal peptide spans M1–Y24. Topologically, residues V25–Y673 are extracellular. An N-linked (GlcNAc...) asparagine; by host glycan is attached at N36. Residues C43 and C56 are joined by a disulfide bond. N-linked (GlcNAc...) asparagine; by host glycosylation is found at N69, N78, N113, N119, N131, N137, N145, N160, N173, N186, N200, N232, N235, N242, N266, N272, N283, N294, N304, N359, N392, N402, N405, N442, N457, and N460. 5 disulfides stabilise this stretch: C100-C208, C107-C199, C112-C157, C221-C251, and C231-C243. Residues C112–D156 are V1. Residues C157–C199 are V2. The tract at residues C299 to W331 is V3. Residues C299 and C332 are joined by a disulfide bond. Disulfide bonds link C384–C441 and C391–C414. The tract at residues C391–C414 is V4. Residues N457–F463 are V5. The tract at residues G506 to A526 is fusion peptide. An immunosuppression region spans residues L569–Q585. Residues N605, N614, and N630 are each glycosylated (N-linked (GlcNAc...) asparagine; by host). Residues N614–M646 are a coiled coil. Positions K651 to Q672 are MPER; binding to GalCer. Residues G674–L694 traverse the membrane as a helical segment. Residues S695–L859 lie on the Cytoplasmic side of the membrane. The YXXV motif; contains endocytosis signal motif lies at Y701 to V704. C767 carries the S-palmitoyl cysteine; by host lipid modification. Positions L858–L859 match the Di-leucine internalization motif motif.

In terms of assembly, the mature envelope protein (Env) consists of a homotrimer of non-covalently associated gp120-gp41 heterodimers. The resulting complex protrudes from the virus surface as a spike. There seems to be as few as 10 spikes on the average virion. Interacts with human CD4, CCR5 and CXCR4, to form a P4HB/PDI-CD4-CXCR4-gp120 complex. Gp120 also interacts with the C-type lectins CD209/DC-SIGN and CLEC4M/DC-SIGNR (collectively referred to as DC-SIGN(R)). Gp120 and gp41 interact with GalCer. The mature envelope protein (Env) consists of a homotrimer of non-covalently associated gp120-gp41 heterodimers. The resulting complex protrudes from the virus surface as a spike. There seems to be as few as 10 spikes on the average virion. Specific enzymatic cleavages in vivo yield mature proteins. Envelope glycoproteins are synthesized as an inactive precursor that is heavily N-glycosylated and processed likely by host cell furin in the Golgi to yield the mature SU and TM proteins. The cleavage site between SU and TM requires the minimal sequence [KR]-X-[KR]-R. In terms of processing, palmitoylation of the transmembrane protein and of Env polyprotein (prior to its proteolytic cleavage) is essential for their association with host cell membrane lipid rafts. Palmitoylation is therefore required for envelope trafficking to classical lipid rafts, but not for viral replication.

The protein resides in the virion membrane. The protein localises to the host cell membrane. It localises to the host endosome membrane. Functionally, the surface protein gp120 (SU) attaches the virus to the host lymphoid cell by binding to the primary receptor CD4. This interaction induces a structural rearrangement creating a high affinity binding site for a chemokine coreceptor like CXCR4 and/or CCR5. This peculiar 2 stage receptor-interaction strategy allows gp120 to maintain the highly conserved coreceptor-binding site in a cryptic conformation, protected from neutralizing antibodies. Since CD4 also displays a binding site for the disulfide-isomerase P4HB/PDI, a P4HB/PDI-CD4-CXCR4-gp120 complex may form. In that complex, P4HB/PDI could reach and reduce gp120 disulfide bonds, causing major conformational changes in gp120. TXN, another PDI family member could also be involved in disulfide rearrangements in Env during fusion. These changes are transmitted to the transmembrane protein gp41 and are thought to activate its fusogenic potential by unmasking its fusion peptide. Its function is as follows. The surface protein gp120 is a ligand for CD209/DC-SIGN and CLEC4M/DC-SIGNR, which are respectively found on dendritic cells (DCs), and on endothelial cells of liver sinusoids and lymph node sinuses. These interactions allow capture of viral particles at mucosal surfaces by these cells and subsequent transmission to permissive cells. DCs are professional antigen presenting cells, critical for host immunity by inducing specific immune responses against a broad variety of pathogens. They act as sentinels in various tissues where they take up antigen, process it, and present it to T-cells following migration to lymphoid organs. HIV subverts the migration properties of dendritic cells to gain access to CD4+ T-cells in lymph nodes. Virus transmission to permissive T-cells occurs either in trans (without DCs infection, through viral capture and transmission), or in cis (following DCs productive infection, through the usual CD4-gp120 interaction), thereby inducing a robust infection. In trans infection, bound virions remain infectious over days and it is proposed that they are not degraded, but protected in non-lysosomal acidic organelles within the DCs close to the cell membrane thus contributing to the viral infectious potential during DCs' migration from the periphery to the lymphoid tissues. On arrival at lymphoid tissues, intact virions recycle back to DCs' cell surface allowing virus transmission to CD4+ T-cells. Virion capture also seems to lead to MHC-II-restricted viral antigen presentation, and probably to the activation of HIV-specific CD4+ cells. The transmembrane protein gp41 (TM) acts as a class I viral fusion protein. Under the current model, the protein has at least 3 conformational states: pre-fusion native state, pre-hairpin intermediate state, and post-fusion hairpin state. During fusion of viral and target intracellular membranes, the coiled coil regions (heptad repeats) assume a trimer-of-hairpins structure, positioning the fusion peptide in close proximity to the C-terminal region of the ectodomain. The formation of this structure appears to drive apposition and subsequent fusion of viral and target cell membranes. Complete fusion occurs in host cell endosomes and is dynamin-dependent, however some lipid transfer might occur at the plasma membrane. The virus undergoes clathrin-dependent internalization long before endosomal fusion, thus minimizing the surface exposure of conserved viral epitopes during fusion and reducing the efficacy of inhibitors targeting these epitopes. Membranes fusion leads to delivery of the nucleocapsid into the cytoplasm. In terms of biological role, the envelope glycoprotein gp160 precursor down-modulates cell surface CD4 antigen by interacting with it in the endoplasmic reticulum and blocking its transport to the cell surface. Functionally, the gp120-gp41 heterodimer seems to contribute to T-cell depletion during HIV-1 infection. The envelope glycoproteins expressed on the surface of infected cells induce apoptosis through an interaction with uninfected cells expressing the receptor (CD4) and the coreceptors CXCR4 or CCR5. This type of bystander killing may be obtained by at least three distinct mechanisms. First, the interaction between the 2 cells can induce cellular fusion followed by nuclear fusion within the syncytium. Syncytia are condemned to die from apoptosis. Second, the 2 interacting cells may not fuse entirely and simply exchange plasma membrane lipids, after a sort of hemifusion process, followed by rapid death. Third, it is possible that virus-infected cells, on the point of undergoing apoptosis, fuse with CD4-expressing cells, in which case apoptosis is rapidly transmitted from one cell to the other and thus occurs in a sort of contagious fashion. Its function is as follows. The gp120-gp41 heterodimer allows rapid transcytosis of the virus through CD4 negative cells such as simple epithelial monolayers of the intestinal, rectal and endocervical epithelial barriers. Both gp120 and gp41 specifically recognize glycosphingolipids galactosyl-ceramide (GalCer) or 3' sulfo-galactosyl-ceramide (GalS) present in the lipid rafts structures of epithelial cells. Binding to these alternative receptors allows the rapid transcytosis of the virus through the epithelial cells. This transcytotic vesicle-mediated transport of virions from the apical side to the basolateral side of the epithelial cells does not involve infection of the cells themselves. The sequence is that of Envelope glycoprotein gp160 (env) from Homo sapiens (Human).